The sequence spans 441 residues: MTSKKKQIKLGVFLAGTGHHVASWRHPDAPSDASMNLDYFKELAKTAERGKLDMLFLADSLSIDSKSHPNVLTRFEPFTLLSALAQVTSKIGLTATASTTYSEPFHIARQFASLDHLSNGRAGWNVVTSSIESTALNFSGEKHLEHHLRYQRAEEFVEIVKGLWDSWEEDAFIRNKETGEFFDKEKMHELNHKGEYFSVRGPLNVSRTPQGQPVIIQAGSSGDGKALAAKTAEVIFTAQNHLESAQEFYQSIKEQAAEFGRDPEKIAIMPGIFPIIADTEEAAQAKYKELQDLIIPSVGLQILQNYLGGIDLSAYPLDGPLPKLDAEASNAVKSRFKLVQEMAERDNMTIRELYKYVAGSRGHHIFVGTPEQLADKMQEWVDTKACDGFNIMPPLLPEGIEVFVDQVVPILQERGVFRKEYEGTTLREHFGLEKPVNRYAK.

6 residues coordinate FMN: D59, T96, H146, Y150, S220, and S221.

Belongs to the NtaA/SnaA/DszA monooxygenase family. In terms of assembly, homodimer. The cofactor is FMN.

It catalyses the reaction N-acetyl-S-(2-succino)-L-cysteine + NADH + O2 + H(+) = N-acetyl-L-cysteine + oxaloacetate + NAD(+) + H2O. It functions in the pathway amino-acid biosynthesis; L-cysteine biosynthesis. Its function is as follows. Catalyzes the oxidative cleavage of the C-S bond of N-acetyl-S-(2-succino)cysteine, forming oxaloacetate and N-acetylcysteine (NAC). Is involved in a S-(2-succino)cysteine (2SC) degradation pathway that allows B.subtilis to grow on 2SC as a sole sulfur source, via its metabolization to cysteine. Shows almost no activity on S-succinylglutathione and 2SC. This Bacillus subtilis (strain 168) protein is N-acetyl-S-(2-succino)cysteine monooxygenase.